Here is a 315-residue protein sequence, read N- to C-terminus: Cysteine synthase (315 aa).

Asn8 and Arg35 together coordinate hydrogen sulfide. Residue Lys42 is modified to N6-(pyridoxal phosphate)lysine. Pyridoxal 5'-phosphate is bound by residues Asn72 and 177-181; that span reads GTGGT. Residue Leu269 participates in hydrogen sulfide binding. Position 273 (Ser273) interacts with pyridoxal 5'-phosphate.

Belongs to the cysteine synthase/cystathionine beta-synthase family. Homodimer. Pyridoxal 5'-phosphate is required as a cofactor.

The enzyme catalyses O-acetyl-L-serine + hydrogen sulfide = L-cysteine + acetate. The protein operates within amino-acid biosynthesis; L-cysteine biosynthesis; L-cysteine from L-serine: step 2/2. The chain is Cysteine synthase (cysK) from Buchnera aphidicola subsp. Acyrthosiphon pisum (strain APS) (Acyrthosiphon pisum symbiotic bacterium).